Here is a 453-residue protein sequence, read N- to C-terminus: Phenylalanine-4-hydroxylase (453 aa).

Ala-2 is modified (N-acetylalanine). Phosphoserine is present on Ser-16. One can recognise an ACT domain in the interval 36–114 (SLIFSLKEEV…TVHELSRDKE (79 aa)). Fe cation contacts are provided by His-285, His-290, and Glu-330.

The protein belongs to the biopterin-dependent aromatic amino acid hydroxylase family. Homodimer and homotetramer. It depends on Fe(2+) as a cofactor. Phosphorylation at Ser-16 increases basal activity and facilitates activation by the substrate phenylalanine.

The enzyme catalyses (6R)-L-erythro-5,6,7,8-tetrahydrobiopterin + L-phenylalanine + O2 = (4aS,6R)-4a-hydroxy-L-erythro-5,6,7,8-tetrahydrobiopterin + L-tyrosine. The protein operates within amino-acid degradation; L-phenylalanine degradation; acetoacetate and fumarate from L-phenylalanine: step 1/6. N-terminal region of PAH is thought to contain allosteric binding sites for phenylalanine and to constitute an 'inhibitory' domain that regulates the activity of a catalytic domain in the C-terminal portion of the molecule. Functionally, catalyzes the hydroxylation of L-phenylalanine to L-tyrosine. The sequence is that of Phenylalanine-4-hydroxylase (Pah) from Mus musculus (Mouse).